The following is a 158-amino-acid chain: SsrA-binding protein (158 aa).

It belongs to the SmpB family.

Its subcellular location is the cytoplasm. Its function is as follows. Required for rescue of stalled ribosomes mediated by trans-translation. Binds to transfer-messenger RNA (tmRNA), required for stable association of tmRNA with ribosomes. tmRNA and SmpB together mimic tRNA shape, replacing the anticodon stem-loop with SmpB. tmRNA is encoded by the ssrA gene; the 2 termini fold to resemble tRNA(Ala) and it encodes a 'tag peptide', a short internal open reading frame. During trans-translation Ala-aminoacylated tmRNA acts like a tRNA, entering the A-site of stalled ribosomes, displacing the stalled mRNA. The ribosome then switches to translate the ORF on the tmRNA; the nascent peptide is terminated with the 'tag peptide' encoded by the tmRNA and targeted for degradation. The ribosome is freed to recommence translation, which seems to be the essential function of trans-translation. This Hydrogenovibrio crunogenus (strain DSM 25203 / XCL-2) (Thiomicrospira crunogena) protein is SsrA-binding protein.